We begin with the raw amino-acid sequence, 158 residues long: Cyclic pyranopterin monophosphate synthase (158 aa).

Substrate-binding positions include 76–78 and 114–115; these read LCH and ME. Asp129 is a catalytic residue.

The protein belongs to the MoaC family. In terms of assembly, homohexamer; trimer of dimers.

It catalyses the reaction (8S)-3',8-cyclo-7,8-dihydroguanosine 5'-triphosphate = cyclic pyranopterin phosphate + diphosphate. It participates in cofactor biosynthesis; molybdopterin biosynthesis. Functionally, catalyzes the conversion of (8S)-3',8-cyclo-7,8-dihydroguanosine 5'-triphosphate to cyclic pyranopterin monophosphate (cPMP). This Shewanella frigidimarina (strain NCIMB 400) protein is Cyclic pyranopterin monophosphate synthase.